Reading from the N-terminus, the 238-residue chain is 2,3-bisphosphoglycerate-dependent phosphoglycerate mutase (238 aa).

Substrate-binding positions include arginine 8–asparagine 15, threonine 21–glycine 22, arginine 60, glutamate 86–tyrosine 89, lysine 97, arginine 113–arginine 114, and glycine 182–asparagine 183. The active-site Tele-phosphohistidine intermediate is histidine 9. Glutamate 86 acts as the Proton donor/acceptor in catalysis.

It belongs to the phosphoglycerate mutase family. BPG-dependent PGAM subfamily. Homodimer.

It catalyses the reaction (2R)-2-phosphoglycerate = (2R)-3-phosphoglycerate. It participates in carbohydrate degradation; glycolysis; pyruvate from D-glyceraldehyde 3-phosphate: step 3/5. In terms of biological role, catalyzes the interconversion of 2-phosphoglycerate and 3-phosphoglycerate. This is 2,3-bisphosphoglycerate-dependent phosphoglycerate mutase from Pelagibacter ubique (strain HTCC1062).